Here is a 166-residue protein sequence, read N- to C-terminus: Sec-independent protein translocase protein TatB (166 aa).

Residues Phe-2–Gly-22 traverse the membrane as a helical segment. The disordered stretch occupies residues Ser-69–Gly-166. Composition is skewed to polar residues over residues Gln-88–Tyr-97 and Gln-112–Asn-132. Low complexity predominate over residues Pro-133–Ser-153. Residues Gly-155 to Gly-166 are compositionally biased toward polar residues.

It belongs to the TatB family. As to quaternary structure, the Tat system comprises two distinct complexes: a TatABC complex, containing multiple copies of TatA, TatB and TatC subunits, and a separate TatA complex, containing only TatA subunits. Substrates initially bind to the TatABC complex, which probably triggers association of the separate TatA complex to form the active translocon.

It localises to the cell inner membrane. In terms of biological role, part of the twin-arginine translocation (Tat) system that transports large folded proteins containing a characteristic twin-arginine motif in their signal peptide across membranes. Together with TatC, TatB is part of a receptor directly interacting with Tat signal peptides. TatB may form an oligomeric binding site that transiently accommodates folded Tat precursor proteins before their translocation. The chain is Sec-independent protein translocase protein TatB from Shewanella baltica (strain OS223).